Here is a 95-residue protein sequence, read N- to C-terminus: Aspartyl/glutamyl-tRNA(Asn/Gln) amidotransferase subunit C (95 aa).

This sequence belongs to the GatC family. Heterotrimer of A, B and C subunits.

The enzyme catalyses L-glutamyl-tRNA(Gln) + L-glutamine + ATP + H2O = L-glutaminyl-tRNA(Gln) + L-glutamate + ADP + phosphate + H(+). The catalysed reaction is L-aspartyl-tRNA(Asn) + L-glutamine + ATP + H2O = L-asparaginyl-tRNA(Asn) + L-glutamate + ADP + phosphate + 2 H(+). Its function is as follows. Allows the formation of correctly charged Asn-tRNA(Asn) or Gln-tRNA(Gln) through the transamidation of misacylated Asp-tRNA(Asn) or Glu-tRNA(Gln) in organisms which lack either or both of asparaginyl-tRNA or glutaminyl-tRNA synthetases. The reaction takes place in the presence of glutamine and ATP through an activated phospho-Asp-tRNA(Asn) or phospho-Glu-tRNA(Gln). The sequence is that of Aspartyl/glutamyl-tRNA(Asn/Gln) amidotransferase subunit C from Nitrobacter winogradskyi (strain ATCC 25391 / DSM 10237 / CIP 104748 / NCIMB 11846 / Nb-255).